The sequence spans 903 residues: HTH-type transcriptional regulator MalT (903 aa).

39–46 (CPAGYGKT) contacts ATP. The HTH luxR-type domain maps to 832-897 (ELIRTSPLTQ…EAVQQAQRLL (66 aa)). The H-T-H motif DNA-binding region spans 856-875 (NDQIANELDVAATTIKTHIR).

This sequence belongs to the MalT family. Monomer in solution. Oligomerizes to an active state in the presence of the positive effectors ATP and maltotriose.

Activated by ATP and maltotriose, which are both required for DNA binding. Its function is as follows. Positively regulates the transcription of the maltose regulon whose gene products are responsible for uptake and catabolism of malto-oligosaccharides. Specifically binds to the promoter region of its target genes, recognizing a short DNA motif called the MalT box. This Yersinia pseudotuberculosis serotype O:1b (strain IP 31758) protein is HTH-type transcriptional regulator MalT.